Reading from the N-terminus, the 190-residue chain is uncharacterized protein (190 aa).

This is an uncharacterized protein from Borreliella burgdorferi (strain ATCC 35210 / DSM 4680 / CIP 102532 / B31) (Borrelia burgdorferi).